A 293-amino-acid chain; its full sequence is Phosphatidylcholine-sterol acyltransferase (293 aa).

N-linked (GlcNAc...) asparagine glycosylation occurs at Asn-26. The active-site Nucleophile is the Ser-123. An N-linked (GlcNAc...) asparagine glycan is attached at Asn-179. Cys-220 and Cys-263 are disulfide-bonded. The Charge relay system role is filled by Asp-252. The N-linked (GlcNAc...) asparagine glycan is linked to Asn-280. His-284 functions as the Charge relay system in the catalytic mechanism.

The protein belongs to the AB hydrolase superfamily. Lipase family.

It is found in the secreted. It catalyses the reaction a sterol + a 1,2-diacyl-sn-glycero-3-phosphocholine = a sterol ester + a 1-acyl-sn-glycero-3-phosphocholine. With respect to regulation, APOA1 is the most potent activator in plasma. Also activated by APOE, APOC1 and APOA4. Its function is as follows. Central enzyme in the extracellular metabolism of plasma lipoproteins. Synthesized mainly in the liver and secreted into plasma where it converts cholesterol and phosphatidylcholines (lecithins) to cholesteryl esters and lysophosphatidylcholines on the surface of high and low density lipoproteins (HDLs and LDLs). The cholesterol ester is then transported back to the liver. Has a preference for plasma 16:0-18:2 or 18:O-18:2 phosphatidylcholines. Also produced in the brain by primary astrocytes, and esterifies free cholesterol on nascent APOE-containing lipoproteins secreted from glia and influences cerebral spinal fluid (CSF) APOE- and APOA1 levels. Together with APOE and the cholesterol transporter ABCA1, plays a key role in the maturation of glial-derived, nascent lipoproteins. Required for remodeling high-density lipoprotein particles into their spherical forms. This Gerbilliscus gambianus (Gambian gerbil) protein is Phosphatidylcholine-sterol acyltransferase (LCAT).